The sequence spans 357 residues: Alanine racemase (357 aa).

Lys-34 acts as the Proton acceptor; specific for D-alanine in catalysis. Lys-34 is modified (N6-(pyridoxal phosphate)lysine). Arg-129 contacts substrate. Residue Tyr-254 is the Proton acceptor; specific for L-alanine of the active site. Met-302 is a binding site for substrate.

It belongs to the alanine racemase family. Pyridoxal 5'-phosphate is required as a cofactor.

It carries out the reaction L-alanine = D-alanine. It participates in amino-acid biosynthesis; D-alanine biosynthesis; D-alanine from L-alanine: step 1/1. In terms of biological role, catalyzes the interconversion of L-alanine and D-alanine. Likely plays an important role in supplying D-alanine, which is an indispensable constituent in the biosynthesis of bacterial cell-wall peptidoglycan. In Aeromonas hydrophila subsp. hydrophila (strain ATCC 7966 / DSM 30187 / BCRC 13018 / CCUG 14551 / JCM 1027 / KCTC 2358 / NCIMB 9240 / NCTC 8049), this protein is Alanine racemase.